Reading from the N-terminus, the 112-residue chain is Large ribosomal subunit protein bL17 (112 aa).

The protein belongs to the bacterial ribosomal protein bL17 family. As to quaternary structure, part of the 50S ribosomal subunit. Contacts protein L32.

The sequence is that of Large ribosomal subunit protein bL17 from Moorella thermoacetica (strain ATCC 39073 / JCM 9320).